The primary structure comprises 260 residues: Adenosylcobinamide-GDP ribazoletransferase (260 aa).

Transmembrane regions (helical) follow at residues 43–63 (LVGTLVGLIAALVFYLTQFIF), 64–84 (PASVAVVLAMIATVLLTGGFH), 117–137 (GSLALMLALLLKFQLLSELAL), 143–163 (VAGGLVLGHTLSRAFAASIIF), 197–217 (VICLLLTGVGATLVILVTLFV), and 237–257 (TLGACQQILELVVYLVLLLLW).

Belongs to the CobS family. Requires Mg(2+) as cofactor.

The protein localises to the cell inner membrane. It carries out the reaction alpha-ribazole + adenosylcob(III)inamide-GDP = adenosylcob(III)alamin + GMP + H(+). The enzyme catalyses alpha-ribazole 5'-phosphate + adenosylcob(III)inamide-GDP = adenosylcob(III)alamin 5'-phosphate + GMP + H(+). The protein operates within cofactor biosynthesis; adenosylcobalamin biosynthesis; adenosylcobalamin from cob(II)yrinate a,c-diamide: step 7/7. Joins adenosylcobinamide-GDP and alpha-ribazole to generate adenosylcobalamin (Ado-cobalamin). Also synthesizes adenosylcobalamin 5'-phosphate from adenosylcobinamide-GDP and alpha-ribazole 5'-phosphate. The protein is Adenosylcobinamide-GDP ribazoletransferase of Shewanella amazonensis (strain ATCC BAA-1098 / SB2B).